An 863-amino-acid chain; its full sequence is Dipeptidyl peptidase 9 (863 aa).

The tract at residues Met1–Pro20 is disordered. At Ala2 the chain carries N-acetylalanine. Residues Ser730, Asp808, and His840 each act as charge relay system in the active site. Ser730 is a binding site for Val-boroPro.

It belongs to the peptidase S9B family. DPPIV subfamily. In terms of assembly, homodimer. Forms a ternary complex with NLRP1, composed of a DPP9 homodimer, one full-length NLRP1 protein, and one cleaved C-terminus of NLRP1 (NACHT, LRR and PYD domains-containing protein 1, C-terminus). Forms a ternary complex with CARD8, composed of a DPP9 homodimer, one full-length NLRP1 protein, and one cleaved C-terminus of CARD8 (Caspase recruitment domain-containing protein 8, C-terminus). In the ternary complex, only one subunit of the DPP9 homodimer is bound to NLRP1 or CARD8. In terms of tissue distribution, ubiquitously expressed, with highest levels in liver, heart and muscle, and lowest levels in brain.

Its subcellular location is the cytoplasm. It localises to the cytosol. It is found in the nucleus. The catalysed reaction is Release of an N-terminal dipeptide, Xaa-Yaa-|-Zaa-, from a polypeptide, preferentially when Yaa is Pro, provided Zaa is neither Pro nor hydroxyproline.. Inhibited by the serine proteinase inhibitor 4-(2-aminoethyl)benzenesulphonyl fluoride (AEBSF), and by di-isopropylfluorophosphate. Inhibited by Val-boroPro (Talabostat, PT-100), a non-selective inhibitor, which triggers pyroptosis in monocytes and macrophages. Val-boroPro inhibits activity by binding to the active site, mimicking a substrate-bound state, thereby displacing the C-terminal fragment of NLRP1, leading to activation of the NLRP1 inflammasome. In contrast, Val-boroPro does not directly displaces CARD8: it acts by promoting degradation of the N-terminal part of CARD8, leading to indirect disruption of the ternary complex. Chemical inhibition of DPP9 by Val-boroPro in HIV-1-infected cells activates the CARD8 inflammasome, triggering cell death, offering a promising strategy for the elimination of HIV-1 reservoirs in people living with HIV-1. In terms of biological role, dipeptidyl peptidase that cleaves off N-terminal dipeptides from proteins having a Pro or Ala residue at position 2. Acts as a key inhibitor of caspase-1-dependent monocyte and macrophage pyroptosis in resting cells by preventing activation of NLRP1 and CARD8. Sequesters the cleaved C-terminal part of NLRP1 and CARD8, which respectively constitute the active part of the NLRP1 and CARD8 inflammasomes, in a ternary complex, thereby preventing their oligomerization and activation. The dipeptidyl peptidase activity is required to suppress NLRP1 and CARD8; however, neither NLRP1 nor CARD8 are bona fide substrates of DPP9, suggesting the existence of substrate(s) required for NLRP1 and CARD8 inhibition. The chain is Dipeptidyl peptidase 9 from Homo sapiens (Human).